A 124-amino-acid chain; its full sequence is Membrane magnesium transporter 2 (124 aa).

Position 1 (Met1) is a topological domain, cytoplasmic. The helical transmembrane segment at 2 to 22 threads the bilayer; it reads VAWLWKVLVGVGLSALAHAAF. The Lumenal portion of the chain corresponds to 23–44; sequence SAAQHRSHTRLAEMKYEPLPTD. Residues 45-65 form a helical membrane-spanning segment; sequence IVLQTLLAFALTCYGVVHTAG. Topologically, residues 66–124 are cytoplasmic; it reads DFRDRDATSELKNVTFDTLRNRPSFYVFQHSGSSLLQPSDTTRSSNLNVPSSDDIRLKF.

This sequence belongs to the membrane magnesium transporter (TC 1.A.67) family.

Its subcellular location is the golgi apparatus membrane. The protein resides in the early endosome membrane. Functionally, mediates Mg(2+) transport. In Rattus norvegicus (Rat), this protein is Membrane magnesium transporter 2.